A 1040-amino-acid polypeptide reads, in one-letter code: Multidrug resistance protein MdtB (1040 aa).

12 helical membrane-spanning segments follow: residues 16 to 36, 347 to 367, 369 to 389, 396 to 416, 440 to 460, 472 to 492, 537 to 557, 863 to 883, 888 to 908, 911 to 931, 968 to 988, and 998 to 1018; these read FIMR…AGII, LMMA…NIPA, IIPG…MVFL, LTLM…IVVI, IGFT…PLLF, FAIT…TLTP, WLTL…WVFI, LGST…VLGI, FIHP…ALLA, IAGS…IGIV, ILMT…STGV, and IGMV…TPVI.

This sequence belongs to the resistance-nodulation-cell division (RND) (TC 2.A.6) family. MdtB subfamily. Part of a tripartite efflux system composed of MdtA, MdtB and MdtC. MdtB forms a heteromultimer with MdtC.

Its subcellular location is the cell inner membrane. Its function is as follows. The MdtABC tripartite complex confers resistance against novobiocin and deoxycholate. The polypeptide is Multidrug resistance protein MdtB (Escherichia coli (strain K12 / MC4100 / BW2952)).